A 566-amino-acid polypeptide reads, in one-letter code: Chaperone Ric-8 (566 aa).

Belongs to the synembryn family. Interacts with GDP-bound G(i)-alpha protein. Does not interact with G-alpha proteins when they are in complex with subunits beta and gamma. Interacts with Frq2 in a Ca(2+)-independent manner but does not interact with Frq1.

It is found in the cytoplasm. It localises to the cell cortex. Its subcellular location is the presynapse. Functionally, chaperone that specifically binds and folds some, but not all, nascent G alpha proteins prior to G protein heterotrimer formation, promoting their stability and activity. Also acts as a guanine nucleotide exchange factor (GEF) for G alpha proteins by stimulating exchange of bound GDP for free GTP. Plays a key role in asymmetric spindle positioning, a step for asymmetric cell division that generates cell diversity during development by activating G(i) alpha protein independently of G-protein coupled receptors. Required during gastrulation and sensory organ precursor (SOP) formation. Plays a role in positively regulating synapse number and neurotransmitter release. In Drosophila pseudoobscura pseudoobscura (Fruit fly), this protein is Chaperone Ric-8 (ric8a).